The primary structure comprises 262 residues: tRNA pseudouridine synthase A 2 (262 aa).

The active-site Nucleophile is the aspartate 66. Residue tyrosine 125 coordinates substrate.

This sequence belongs to the tRNA pseudouridine synthase TruA family. In terms of assembly, homodimer.

The catalysed reaction is uridine(38/39/40) in tRNA = pseudouridine(38/39/40) in tRNA. Formation of pseudouridine at positions 38, 39 and 40 in the anticodon stem and loop of transfer RNAs. This is tRNA pseudouridine synthase A 2 from Protochlamydia amoebophila (strain UWE25).